The sequence spans 292 residues: ATP synthase gamma chain (292 aa).

This sequence belongs to the ATPase gamma chain family. In terms of assembly, F-type ATPases have 2 components, CF(1) - the catalytic core - and CF(0) - the membrane proton channel. CF(1) has five subunits: alpha(3), beta(3), gamma(1), delta(1), epsilon(1). CF(0) has three main subunits: a, b and c.

It localises to the cell membrane. Functionally, produces ATP from ADP in the presence of a proton gradient across the membrane. The gamma chain is believed to be important in regulating ATPase activity and the flow of protons through the CF(0) complex. The sequence is that of ATP synthase gamma chain from Streptococcus pneumoniae (strain JJA).